The sequence spans 73 residues: UPF0154 protein MG335.1 homolog (73 aa).

A helical membrane pass occupies residues 6–26 (LALGLGIPLSLLVGVIIGYFI).

The protein belongs to the UPF0154 family.

The protein resides in the membrane. The sequence is that of UPF0154 protein MG335.1 homolog from Mycoplasma pneumoniae (strain ATCC 29342 / M129 / Subtype 1) (Mycoplasmoides pneumoniae).